The following is a 292-amino-acid chain: Ribosomal protein L11 methyltransferase (292 aa).

Residues T143, G164, D186, and N228 each coordinate S-adenosyl-L-methionine.

The protein belongs to the methyltransferase superfamily. PrmA family.

It is found in the cytoplasm. It carries out the reaction L-lysyl-[protein] + 3 S-adenosyl-L-methionine = N(6),N(6),N(6)-trimethyl-L-lysyl-[protein] + 3 S-adenosyl-L-homocysteine + 3 H(+). Functionally, methylates ribosomal protein L11. In Aeromonas hydrophila subsp. hydrophila (strain ATCC 7966 / DSM 30187 / BCRC 13018 / CCUG 14551 / JCM 1027 / KCTC 2358 / NCIMB 9240 / NCTC 8049), this protein is Ribosomal protein L11 methyltransferase.